The chain runs to 215 residues: UPF0502 protein CKO_01995 (215 aa).

Belongs to the UPF0502 family.

This Citrobacter koseri (strain ATCC BAA-895 / CDC 4225-83 / SGSC4696) protein is UPF0502 protein CKO_01995.